Here is a 157-residue protein sequence, read N- to C-terminus: Ribosomal RNA large subunit methyltransferase H (157 aa).

S-adenosyl-L-methionine-binding positions include L73, G105, and 124-129; that span reads LSKMTF.

This sequence belongs to the RNA methyltransferase RlmH family. In terms of assembly, homodimer.

Its subcellular location is the cytoplasm. The catalysed reaction is pseudouridine(1915) in 23S rRNA + S-adenosyl-L-methionine = N(3)-methylpseudouridine(1915) in 23S rRNA + S-adenosyl-L-homocysteine + H(+). Functionally, specifically methylates the pseudouridine at position 1915 (m3Psi1915) in 23S rRNA. The chain is Ribosomal RNA large subunit methyltransferase H from Phocaeicola vulgatus (strain ATCC 8482 / DSM 1447 / JCM 5826 / CCUG 4940 / NBRC 14291 / NCTC 11154) (Bacteroides vulgatus).